Consider the following 1048-residue polypeptide: 3-hydroxy-3-methylglutaryl-coenzyme A reductase (1048 aa).

Residues 1 to 32 lie on the Cytoplasmic side of the membrane; that stretch reads MDPVVKKPSPGGVQHRVTKGLRAIVGHACRHP. A helical membrane pass occupies residues 33–53; the sequence is IHTLLVTALTAATTHLHVLEG. The Lumenal segment spans residues 54-220; it reads TYQAAHRGLA…FLHRVKHAET (167 aa). A helical transmembrane segment spans residues 221–241; it reads VDLVIIGLSYLAMNMTVVSLF. The SSD domain maps to 222 to 403; the sequence is DLVIIGLSYL…FTFYATILCV (182 aa). Topologically, residues 242 to 250 are cytoplasmic; that stretch reads RVMRQLGSR. Residues 251 to 271 traverse the membrane as a helical segment; it reads FWLATSVLLSGAFAFVLGLGI. Topologically, residues 272 to 276 are lumenal; it reads TTTCD. The chain crosses the membrane as a helical span at residues 277–297; that stretch reads VPVDMLLLFEGIPYLVLTVGF. The Cytoplasmic portion of the chain corresponds to 298–348; the sequence is EKPIQLTRAVLCVSEELRGGWQRPVPNGASSDDSRQSQLIPNIIQLAVDRE. A helical transmembrane segment spans residues 349 to 369; sequence GWYIVRSYLLEIGALALGAVL. At 370-377 the chain is on the lumenal side; sequence RPNDSLGH. Asparagine 372 carries an N-linked (GlcNAc...) asparagine glycan. The helical transmembrane segment at 378-398 threads the bilayer; the sequence is FCFLAAWTLLIDAILLFTFYA. Residues 399–439 are Cytoplasmic-facing; sequence TILCVKLEITRIRSPGGLGQVNAKHPSGIFGHKVKSTNITW. The helical transmembrane segment at 440 to 460 threads the bilayer; the sequence is WKLLTVGGFVLCHFLQLSPFF. Over 461–542 the chain is Lumenal; the sequence is YRVMGEYMAN…LDGLESPLGR (82 aa). N-linked (GlcNAc...) asparagine glycosylation is found at asparagine 470 and asparagine 520. A helical membrane pass occupies residues 543-563; that stretch reads LCLMGALVVSLVLNNHLIHAA. Over 564 to 1048 the chain is Cytoplasmic; sequence RWHAWPQARE…NRSAGATVKK (485 aa). The active-site Charge relay system is the glutamate 729. 735–741 is a binding site for CoA; the sequence is SASRGCK. NADP(+) is bound by residues 796 to 798 and 823 to 831; these read SRF and DAMGMNMIS. The active-site Charge relay system is the lysine 863. A CoA-binding site is contributed by 892–894; that stretch reads VLK. The active-site Charge relay system is the aspartate 939. CoA is bound at residue 1034–1035; the sequence is AH. Catalysis depends on histidine 1035, which acts as the Proton donor. Position 1039-1040 (1039-1040) interacts with NADP(+); sequence NR.

This sequence belongs to the HMG-CoA reductase family.

The protein localises to the endoplasmic reticulum membrane. It catalyses the reaction (R)-mevalonate + 2 NADP(+) + CoA = (3S)-3-hydroxy-3-methylglutaryl-CoA + 2 NADPH + 2 H(+). It participates in metabolic intermediate biosynthesis; (R)-mevalonate biosynthesis; (R)-mevalonate from acetyl-CoA: step 3/3. HMG-CoA reductase; part of the first module of ergosterol biosynthesis pathway that includes the early steps of the pathway, conserved across all eukaryotes, and which results in the formation of mevalonate from acetyl-coenzyme A (acetyl-CoA). In this module, the cytosolic acetyl-CoA acetyltransferase catalyzes the formation of acetoacetyl-CoA. The hydroxymethylglutaryl-CoA synthase then condenses acetyl-CoA with acetoacetyl-CoA to form HMG-CoA. The rate-limiting step of the early module is the reduction to mevalonate by the 3-hydroxy-3-methylglutaryl-coenzyme A (HMG-CoA) reductase. The polypeptide is 3-hydroxy-3-methylglutaryl-coenzyme A reductase (Aspergillus terreus (strain NIH 2624 / FGSC A1156)).